The following is an 844-amino-acid chain: MAIEKLSPGMQQYVDIKKQYPDAFLLFRMGDFYELFYEDAVNAAQILEISLTSRNKNADNPIPMAGVPYHSAQQYIDVLIEQGYKVAIAEQMEDPKQAVGVVKREVVQVITPGTVVDSSKPDSQNNFLVSIDREGNQFGLAYMDLVTGDFYVTGLLDFTLVCGEIRNLKAREVVLGYDLSEEEEQILSRQMNLVLSYEKESFEDLHLLDLRLATVEQTASSKLLQYVHRTQMRELNHLKPVIRYEIKDFLQMDYATKASLDLVENARSGKKQGSLFWLLDETKTAMGMRLLRSWIHRPLIDKERIVQRQEVVQVFLDHFFERSDLTDSLKGVYDIERLASRVSFGKTNPKDLLQLATTLSSVPRIRAILEGMEQPTLAYLIAQLDAIPELESLISAAIAPEAPHVITDGGIIRTGFDETLDKYRCVLREGTSWIAEIEAKERENSGISTLKIDYNKKDGYYFHVTNSQLGNVPAHFFRKATLKNSERFGTEELARIEGDMLEAREKSANLEYEIFMRIREEVGKYIQRLQALAQGIATVDVLQSLAVVAETQHLIRPEFGDDSQIDIRKGRHAVVEKVMGAQTYIPNTIQMAEDTSIQLVTGPNMSGKSTYMRQLAMTAVMAQLGSYVPAESAHLPIFDAIFTRIGAADDLVSGQSTFMVEMMEANNAISHATKNSLILFDELGRGTATYDGMALAQSIIEYIHEHIGAKTLFATHYHELTSLESSLQHLVNVHVATLEQDGQVTFLHKIEPGPADKSYGIHVAKIAGLPADLLARADKILTQLENQGTESPPPMRQTSAVTEQISLFDRAEEHPILAELAKLDVYNMTPMQVMNVLVELKQKL.

602–609 is a binding site for ATP; that stretch reads GPNMSGKS.

It belongs to the DNA mismatch repair MutS family.

Functionally, this protein is involved in the repair of mismatches in DNA. It is possible that it carries out the mismatch recognition step. This protein has a weak ATPase activity. The protein is DNA mismatch repair protein MutS of Streptococcus pneumoniae (strain ATCC 700669 / Spain 23F-1).